Here is a 744-residue protein sequence, read N- to C-terminus: Phosphoribosylformylglycinamidine synthase subunit PurL (744 aa).

Histidine 49 is a catalytic residue. ATP contacts are provided by tyrosine 52 and lysine 91. Glutamate 93 provides a ligand contact to Mg(2+). Substrate contacts are provided by residues 94-97 (SHNH) and arginine 116. The active-site Proton acceptor is the histidine 95. Aspartate 117 provides a ligand contact to Mg(2+). Glutamine 240 is a binding site for substrate. Aspartate 268 provides a ligand contact to Mg(2+). Residue 312 to 314 (ESQ) coordinates substrate. 2 residues coordinate ATP: aspartate 493 and glycine 530. A Mg(2+)-binding site is contributed by asparagine 531. Residue serine 533 participates in substrate binding.

It belongs to the FGAMS family. As to quaternary structure, monomer. Part of the FGAM synthase complex composed of 1 PurL, 1 PurQ and 2 PurS subunits.

Its subcellular location is the cytoplasm. It carries out the reaction N(2)-formyl-N(1)-(5-phospho-beta-D-ribosyl)glycinamide + L-glutamine + ATP + H2O = 2-formamido-N(1)-(5-O-phospho-beta-D-ribosyl)acetamidine + L-glutamate + ADP + phosphate + H(+). It functions in the pathway purine metabolism; IMP biosynthesis via de novo pathway; 5-amino-1-(5-phospho-D-ribosyl)imidazole from N(2)-formyl-N(1)-(5-phospho-D-ribosyl)glycinamide: step 1/2. Part of the phosphoribosylformylglycinamidine synthase complex involved in the purines biosynthetic pathway. Catalyzes the ATP-dependent conversion of formylglycinamide ribonucleotide (FGAR) and glutamine to yield formylglycinamidine ribonucleotide (FGAM) and glutamate. The FGAM synthase complex is composed of three subunits. PurQ produces an ammonia molecule by converting glutamine to glutamate. PurL transfers the ammonia molecule to FGAR to form FGAM in an ATP-dependent manner. PurS interacts with PurQ and PurL and is thought to assist in the transfer of the ammonia molecule from PurQ to PurL. This chain is Phosphoribosylformylglycinamidine synthase subunit PurL, found in Nitrobacter hamburgensis (strain DSM 10229 / NCIMB 13809 / X14).